The following is a 91-amino-acid chain: Probable Fe(2+)-trafficking protein (91 aa).

It belongs to the Fe(2+)-trafficking protein family. Monomer.

Could be a mediator in iron transactions between iron acquisition and iron-requiring processes, such as synthesis and/or repair of Fe-S clusters in biosynthetic enzymes. In Citrobacter koseri (strain ATCC BAA-895 / CDC 4225-83 / SGSC4696), this protein is Probable Fe(2+)-trafficking protein.